We begin with the raw amino-acid sequence, 500 residues long: NAD(P)H-quinone oxidoreductase chain 4, chloroplastic (500 aa).

Helical transmembrane passes span 4-24 (FPWL…ILFI), 37-57 (ICIC…NFQL), 80-100 (LGID…TTLA), 134-154 (LLLF…LLSM), 167-187 (FILY…GMGL), 208-228 (GLEI…PPII), 242-262 (HYST…YGLV), 272-292 (AHSL…IYAA), 330-350 (GAIL…FLAG), 386-406 (LASP…GIIT), 416-436 (ILIT…LLSM), and 462-482 (IFIL…PDFV).

This sequence belongs to the complex I subunit 4 family.

The protein resides in the plastid. The protein localises to the chloroplast thylakoid membrane. The catalysed reaction is a plastoquinone + NADH + (n+1) H(+)(in) = a plastoquinol + NAD(+) + n H(+)(out). It carries out the reaction a plastoquinone + NADPH + (n+1) H(+)(in) = a plastoquinol + NADP(+) + n H(+)(out). The polypeptide is NAD(P)H-quinone oxidoreductase chain 4, chloroplastic (Amborella trichopoda).